Consider the following 121-residue polypeptide: Large ribosomal subunit protein bL19 (121 aa).

It belongs to the bacterial ribosomal protein bL19 family.

Functionally, this protein is located at the 30S-50S ribosomal subunit interface and may play a role in the structure and function of the aminoacyl-tRNA binding site. The polypeptide is Large ribosomal subunit protein bL19 (Mesomycoplasma hyopneumoniae (strain 7448) (Mycoplasma hyopneumoniae)).